Consider the following 235-residue polypeptide: Phosphoribosylaminoimidazole-succinocarboxamide synthase (235 aa).

It belongs to the SAICAR synthetase family.

It carries out the reaction 5-amino-1-(5-phospho-D-ribosyl)imidazole-4-carboxylate + L-aspartate + ATP = (2S)-2-[5-amino-1-(5-phospho-beta-D-ribosyl)imidazole-4-carboxamido]succinate + ADP + phosphate + 2 H(+). It participates in purine metabolism; IMP biosynthesis via de novo pathway; 5-amino-1-(5-phospho-D-ribosyl)imidazole-4-carboxamide from 5-amino-1-(5-phospho-D-ribosyl)imidazole-4-carboxylate: step 1/2. This Caldanaerobacter subterraneus subsp. tengcongensis (strain DSM 15242 / JCM 11007 / NBRC 100824 / MB4) (Thermoanaerobacter tengcongensis) protein is Phosphoribosylaminoimidazole-succinocarboxamide synthase.